The following is a 301-amino-acid chain: tRNA dimethylallyltransferase (301 aa).

An ATP-binding site is contributed by 5 to 12 (GPTASGKS). 7-12 (TASGKS) is a substrate binding site. Residues 30–33 (DSMQ) form an interaction with substrate tRNA region.

Belongs to the IPP transferase family. In terms of assembly, monomer. Requires Mg(2+) as cofactor.

It catalyses the reaction adenosine(37) in tRNA + dimethylallyl diphosphate = N(6)-dimethylallyladenosine(37) in tRNA + diphosphate. Catalyzes the transfer of a dimethylallyl group onto the adenine at position 37 in tRNAs that read codons beginning with uridine, leading to the formation of N6-(dimethylallyl)adenosine (i(6)A). This Rhodopseudomonas palustris (strain TIE-1) protein is tRNA dimethylallyltransferase.